Consider the following 447-residue polypeptide: UMP-CMP kinase 2, mitochondrial (447 aa).

The N-terminal 73 residues, 1–73 (MALISRPRAP…ELLGPPGRSY (73 aa)), are a transit peptide targeting the mitochondrion. Residue 259-266 (GLDATGKT) participates in ATP binding. A coiled-coil region spans residues 380-412 (EERVRRLQGRGQEKTKEEAELEANNVFRQKVEM).

The protein belongs to the thymidylate kinase family. As to expression, strongly expressed in the brain.

It localises to the mitochondrion. The enzyme catalyses CMP + ATP = CDP + ADP. It carries out the reaction dCMP + ATP = dCDP + ADP. The catalysed reaction is a 2'-deoxyribonucleoside 5'-diphosphate + ATP = a 2'-deoxyribonucleoside 5'-triphosphate + ADP. It catalyses the reaction a ribonucleoside 5'-diphosphate + ATP = a ribonucleoside 5'-triphosphate + ADP. Its function is as follows. Mitochondrial nucleotide monophosphate kinase needed for salvage dNTP synthesis that mediates immunomodulatory and antiviral activities through IFN-dependent and IFN-independent pathways. Restricts the replication of multiple viruses including flaviviruses or coronaviruses. Together with viperin/RSAD2 and ddhCTP, suppresses the replication of several coronaviruses through inhibition of the viral RNA-dependent RNA polymerase activities. Concerning flaviviruses, restricts RNA translation when localized to the mitochondria independently of its kinase activity. Is able to phosphorylate dUMP, dCMP, CMP, UMP and monophosphates of the pyrimidine nucleoside analogs ddC, dFdC, araC, BVDU and FdUrd with ATP as phosphate donor. Efficacy is highest for dUMP followed by dCMP while CMP and UMP are poor substrates. Controls therefore mitochondrial DNA synthesis by supplying required deoxyribonucleotides. CMPK2-dependent mitochondrial DNA synthesis is necessary for the production of oxidized mitochondrial DNA fragments after exposure to NLRP3 activators. In turn, cytosolic oxidized mtDNA associates with the NLRP3 inflammasome complex and is required for its activation. The sequence is that of UMP-CMP kinase 2, mitochondrial (Cmpk2) from Mus musculus (Mouse).